Here is a 309-residue protein sequence, read N- to C-terminus: Malate dehydrogenase (309 aa).

Residues 9-14 (GAGFVG) and Asp33 each bind NAD(+). Residues Arg82 and Arg88 each coordinate substrate. NAD(+) is bound by residues Asn95 and 118–120 (VNN). Asn120 and Arg151 together coordinate substrate. His175 functions as the Proton acceptor in the catalytic mechanism.

It belongs to the LDH/MDH superfamily. MDH type 3 family.

It catalyses the reaction (S)-malate + NAD(+) = oxaloacetate + NADH + H(+). Functionally, catalyzes the reversible oxidation of malate to oxaloacetate. The polypeptide is Malate dehydrogenase (Chloroflexus aggregans (strain MD-66 / DSM 9485)).